The primary structure comprises 304 residues: MKIIFMGTPEFAVPALTKLINSNHKVVAAFTQPPKAKGRGLSETKSPIHQLADEAQIPVYTPTTLRNEEAANLINNIDADIIVVIAYGFIIPQNILDAKKYGCLNIHPSDLPRHRGAAPLQRTIIEGDKTSSVCIMQMDAGLDTGDILMKEDFDLPKKITLQELHDKCANLGAELLIKTLANIDKIVPKPQSNEGVTYTHKLTKEEGRVNWQDSAFSINCKVRGMNPWPGVYFKYNDKTIKILEAEYSDEEHNFTPGTIINKNLEIACGKGILMIKKLQQEGKKVLNIEEFLRGFKTPVINKVQ.

A (6S)-5,6,7,8-tetrahydrofolate-binding site is contributed by 109 to 112 (SDLP).

The protein belongs to the Fmt family.

The catalysed reaction is L-methionyl-tRNA(fMet) + (6R)-10-formyltetrahydrofolate = N-formyl-L-methionyl-tRNA(fMet) + (6S)-5,6,7,8-tetrahydrofolate + H(+). Functionally, attaches a formyl group to the free amino group of methionyl-tRNA(fMet). The formyl group appears to play a dual role in the initiator identity of N-formylmethionyl-tRNA by promoting its recognition by IF2 and preventing the misappropriation of this tRNA by the elongation apparatus. This Rickettsia bellii (strain RML369-C) protein is Methionyl-tRNA formyltransferase.